Here is a 137-residue protein sequence, read N- to C-terminus: MKLNLYVLTPKRIIWDCEVKEIILSTNSGQIGVLPNHAPINTAVDMGPLRIRLLNDQWLTAVLWSGFARIVNNEIIILGNDAELGSDIDPEEAQKALEIAEANLSKAEGTKDLVEAKLALRRARIRIEAVNWIPPSN.

The protein belongs to the ATPase epsilon chain family. As to quaternary structure, F-type ATPases have 2 components, CF(1) - the catalytic core - and CF(0) - the membrane proton channel. CF(1) has five subunits: alpha(3), beta(3), gamma(1), delta(1), epsilon(1). CF(0) has three main subunits: a, b and c.

The protein localises to the plastid. Its subcellular location is the chloroplast thylakoid membrane. Its function is as follows. Produces ATP from ADP in the presence of a proton gradient across the membrane. The sequence is that of ATP synthase epsilon chain, chloroplastic from Hordeum vulgare (Barley).